The chain runs to 260 residues: Enoyl-[acyl-carrier-protein] reductase [NADH] FabI (260 aa).

Residues Gly-15, 21 to 22, Gln-42, 66 to 67, and Met-94 contribute to the NAD(+) site; these read SI and DV. Ala-97 provides a ligand contact to substrate. Catalysis depends on proton acceptor residues Tyr-147 and Tyr-157. NAD(+)-binding positions include Lys-164 and 193 to 197; that span reads IKTLA.

The protein belongs to the short-chain dehydrogenases/reductases (SDR) family. FabI subfamily. Homotetramer.

It catalyses the reaction a 2,3-saturated acyl-[ACP] + NAD(+) = a (2E)-enoyl-[ACP] + NADH + H(+). It functions in the pathway lipid metabolism; fatty acid biosynthesis. Its function is as follows. Catalyzes the reduction of a carbon-carbon double bond in an enoyl moiety that is covalently linked to an acyl carrier protein (ACP). Involved in the elongation cycle of fatty acid which are used in the lipid metabolism. This Rickettsia felis (strain ATCC VR-1525 / URRWXCal2) (Rickettsia azadi) protein is Enoyl-[acyl-carrier-protein] reductase [NADH] FabI (fabI).